A 271-amino-acid polypeptide reads, in one-letter code: Ribosomal RNA small subunit methyltransferase A (271 aa).

Residues His-11, Leu-13, Gly-38, Glu-58, Asp-86, and Asn-101 each contribute to the S-adenosyl-L-methionine site.

Belongs to the class I-like SAM-binding methyltransferase superfamily. rRNA adenine N(6)-methyltransferase family. RsmA subfamily.

It is found in the cytoplasm. It carries out the reaction adenosine(1518)/adenosine(1519) in 16S rRNA + 4 S-adenosyl-L-methionine = N(6)-dimethyladenosine(1518)/N(6)-dimethyladenosine(1519) in 16S rRNA + 4 S-adenosyl-L-homocysteine + 4 H(+). Specifically dimethylates two adjacent adenosines (A1518 and A1519) in the loop of a conserved hairpin near the 3'-end of 16S rRNA in the 30S particle. May play a critical role in biogenesis of 30S subunits. The sequence is that of Ribosomal RNA small subunit methyltransferase A from Helicobacter pylori (strain G27).